The chain runs to 914 residues: Probable dipeptidyl-aminopeptidase B (914 aa).

The disordered stretch occupies residues 1-82 (MGAEKRINDE…GLPPPSGAQR (82 aa)). At 1–88 (MGAEKRINDE…GAQRTPKKVS (88 aa)) the chain is on the cytoplasmic side. The span at 26 to 38 (DSTSTASISLALI) shows a compositional bias: low complexity. The chain crosses the membrane as a helical; Signal-anchor for type II membrane protein span at residues 89 to 109 (IIFWLVAALCVGGWLVAFFVF). Topologically, residues 110-914 (MGSPKKDSDK…RSLLKRMSNA (805 aa)) are vacuolar. Residues Asn128, Asn295, Asn347, and Asn617 are each glycosylated (N-linked (GlcNAc...) asparagine). The active-site Charge relay system is Ser751. Asn810 carries N-linked (GlcNAc...) asparagine glycosylation. Active-site charge relay system residues include Asp828 and His861. Asn897 carries an N-linked (GlcNAc...) asparagine glycan.

The protein belongs to the peptidase S9B family.

It localises to the vacuole membrane. It catalyses the reaction Release of an N-terminal dipeptide, Xaa-Yaa-|-Zaa-, from a polypeptide, preferentially when Yaa is Pro, provided Zaa is neither Pro nor hydroxyproline.. In terms of biological role, type IV dipeptidyl-peptidase which removes N-terminal dipeptides sequentially from polypeptides having unsubstituted N-termini provided that the penultimate residue is proline. This is Probable dipeptidyl-aminopeptidase B (DAPB) from Uncinocarpus reesii (strain UAMH 1704).